The chain runs to 288 residues: Programmed cell death protein 1 (288 aa).

Residues 1 to 24 (MWVRQVPWSFTWAVLQLSWQSGWL) form the signal peptide. The Extracellular portion of the chain corresponds to 25–169 (LEVPNGPWRS…PKPEGRFQGM (145 aa)). Positions 31 to 139 (PWRSLTFYPA…PKAKIEESPG (109 aa)) constitute an Ig-like V-type domain. N-linked (GlcNAc...) asparagine glycans are attached at residues Asn-49, Asn-58, Asn-74, and Asn-116. An intrachain disulfide couples Cys-54 to Cys-123. Positions 70 to 77 (LSPSNQTE) are interaction with CD274/PDCD1L1. A helical transmembrane segment spans residues 170–190 (VIGIMSALVGIPVLLLLAWAL). At 191 to 288 (AVFCSTSMSE…HEDGHCSWPL (98 aa)) the chain is on the cytoplasmic side. Positions 223 to 228 (VAYEEL) match the ITIM motif motif. Tyr-225 carries the post-translational modification Phosphotyrosine. Lys-235 is covalently cross-linked (Glycyl lysine isopeptide (Lys-Gly) (interchain with G-Cter in ubiquitin)). Thr-236 carries the post-translational modification Phosphothreonine; by MAPK3. An ITSM motif motif is present at residues 247–251 (EYATI). Tyr-248 bears the Phosphotyrosine mark. Residues 263–288 (GRRGSADGLQGPRPPRHEDGHCSWPL) form a disordered region. Residues 277–288 (PRHEDGHCSWPL) show a composition bias toward basic and acidic residues.

In terms of assembly, monomer. Interacts with CD274/PDCD1L1. Interacts with CD273/PDCD1LG2. Interacts with FBXO38; leading to ubiquitination and degradation by the proteasome. In terms of processing, ubiquitinated at Lys-235 by the SCF(FBXO38) complex, leading to its proteasomal degradation. Ubiquitinated via 'Lys-48'-linked polyubiquitin chains. Deubiquitinated and thus stabilized by USP5. Tyrosine phosphorylated at Tyr-225 (within ITIM motif) and Tyr-248 (ITSM motif) upon ligand binding. Phosphorylation at Tyr-248 promotes the recruitment of the protein tyrosine phosphatase PTPN11/SHP-2 that mediates dephosphorylation of key TCR proximal signaling molecules, such as ZAP70, PRKCQ/PKCtheta and CD247/CD3zeta. Phosphorylation at Thr-236 promotes the recruitment of the deubiquitinase USP5. In terms of tissue distribution, thymus-specific.

Its subcellular location is the cell membrane. Inhibitory receptor on antigen activated T-cells that plays a critical role in induction and maintenance of immune tolerance to self. Delivers inhibitory signals upon binding to ligands, such as CD274/PDCD1L1 and CD273/PDCD1LG2. Following T-cell receptor (TCR) engagement, PDCD1 associates with CD3-TCR in the immunological synapse and directly inhibits T-cell activation. Suppresses T-cell activation through the recruitment of PTPN11/SHP-2: following ligand-binding, PDCD1 is phosphorylated within the ITSM motif, leading to the recruitment of the protein tyrosine phosphatase PTPN11/SHP-2 that mediates dephosphorylation of key TCR proximal signaling molecules, such as ZAP70, PRKCQ/PKCtheta and CD247/CD3zeta. The PDCD1-mediated inhibitory pathway is exploited by tumors to attenuate anti-tumor immunity and facilitate tumor survival. This chain is Programmed cell death protein 1, found in Mus musculus (Mouse).